The primary structure comprises 170 residues: Cilia- and flagella-associated protein 276 (170 aa).

Disordered regions lie at residues 1 to 37 (MPLTRDPFQNPALDKDDSYLGKSRASKKLPYKNPTHL) and 151 to 170 (HTAATNGGYSRKNDGGFFST).

As to quaternary structure, microtubule inner protein component of sperm flagellar doublet microtubules. As to expression, expressed in trachea multiciliated cells.

Its subcellular location is the cytoplasm. The protein localises to the cytoskeleton. It localises to the cilium axoneme. The protein resides in the flagellum axoneme. Microtubule inner protein (MIP) part of the dynein-decorated doublet microtubules (DMTs) in cilia axoneme, which is required for motile cilia beating. May play an important role for the maintenance of myelin-axon integrity. May affect intracellular Ca(2+) homeostasis. This is Cilia- and flagella-associated protein 276 from Bos taurus (Bovine).